The chain runs to 721 residues: MIYEGKAITVKALESGIVELNFDLKGESVNKFNRLTLNELRQAVDAVKADASVKGVIVTSGKDVFIVGADITEFVDNFKLPEAELVAGNLEANRIFSDFEDLGVPTVVAINGIALGGGLEMCLAADYRVISSSARVGLPEVKLGLYPGFGGTVRLPRIIGADNAIEWIASGKENSAEDALKVGVVDAIVAPEKLQAAALDLIQRAISGEFDYKAKRQPKLDKLKLNAIEQMMAFETAKGFVAGQAGPNYPAPVEAIKTIQKAAIFGRDKALEIEAAGFVKMAKTSAAQSLIGLFLNDQELKKKAKGYDEVARDVKQAAVLGAGIMGGGIAYQSAVKGTPILMKDIREEAIQLGLNEASKLLGGRLEKGRLTAAKMAEALNAIRPTLSYGDFGNVDLVVEAVVENPKVKQAVLAEVEANVGENTILASNTSTISISLLAQALKRPENFVGMHFFNPVHMMPLVEVIRGEKSSEEAVATTVAYAKKMGKNPIVVNDCPGFLVNRVLFPYFGGFARLVSAGVDFVRIDKVMEKFGWPMGPAYLMDVVGIDTGHHGRDVMAEGFPDRMKDDRRSAVDALYEANRLGQKNGKGFYVYETDKKGKPKKVNDPAVLDVLKPIVYEQREVSDEDIINWMMIPLCLETVRCLEDGIVETAAEADMGLIYGIGFPPFRGGALRYIDSIGVAEFVALADRYAELGALYQPTAKLREMAANGQSFFGQASSEV.

The segment at 1–190 is enoyl-CoA hydratase/isomerase; it reads MIYEGKAITV…KVGVVDAIVA (190 aa). D297 contributes to the substrate binding site. The segment at 312-721 is 3-hydroxyacyl-CoA dehydrogenase; the sequence is RDVKQAAVLG…SFFGQASSEV (410 aa). Residues M325, D344, 401 to 403, K408, and S430 each bind NAD(+); that span reads VVE. Residue H451 is the For 3-hydroxyacyl-CoA dehydrogenase activity of the active site. N454 is a binding site for NAD(+). N501 and Y660 together coordinate substrate.

In the N-terminal section; belongs to the enoyl-CoA hydratase/isomerase family. The protein in the C-terminal section; belongs to the 3-hydroxyacyl-CoA dehydrogenase family. Heterotetramer of two alpha chains (FadB) and two beta chains (FadA).

The enzyme catalyses a (3S)-3-hydroxyacyl-CoA + NAD(+) = a 3-oxoacyl-CoA + NADH + H(+). The catalysed reaction is a (3S)-3-hydroxyacyl-CoA = a (2E)-enoyl-CoA + H2O. It carries out the reaction a 4-saturated-(3S)-3-hydroxyacyl-CoA = a (3E)-enoyl-CoA + H2O. It catalyses the reaction (3S)-3-hydroxybutanoyl-CoA = (3R)-3-hydroxybutanoyl-CoA. The enzyme catalyses a (3Z)-enoyl-CoA = a 4-saturated (2E)-enoyl-CoA. The catalysed reaction is a (3E)-enoyl-CoA = a 4-saturated (2E)-enoyl-CoA. It functions in the pathway lipid metabolism; fatty acid beta-oxidation. In terms of biological role, involved in the aerobic and anaerobic degradation of long-chain fatty acids via beta-oxidation cycle. Catalyzes the formation of 3-oxoacyl-CoA from enoyl-CoA via L-3-hydroxyacyl-CoA. It can also use D-3-hydroxyacyl-CoA and cis-3-enoyl-CoA as substrate. This Pseudomonas syringae pv. tomato (strain ATCC BAA-871 / DC3000) protein is Fatty acid oxidation complex subunit alpha.